The sequence spans 348 residues: N-formyl peptide receptor 2 (348 aa).

Residue Asn-1 is glycosylated (N-linked (GlcNAc...) asparagine). Topologically, residues Asn-1 to Ile-24 are extracellular. The chain crosses the membrane as a helical span at residues Leu-25 to Val-47. Over Ala-48–Thr-58 the chain is Cytoplasmic. Residues Ile-59–Val-80 traverse the membrane as a helical segment. Residues Ser-81–Leu-97 lie on the Extracellular side of the membrane. Cys-95 and Cys-173 are oxidised to a cystine. The chain crosses the membrane as a helical span at residues Ile-98–Leu-118. The Cytoplasmic portion of the chain corresponds to Asp-119–Ser-137. The chain crosses the membrane as a helical span at residues Leu-138–Leu-159. The Extracellular segment spans residues Phe-160–Arg-202. The helical transmembrane segment at Phe-203–Ala-223 threads the bilayer. The Cytoplasmic portion of the chain corresponds to Lys-224 to Val-239. The helical transmembrane segment at Leu-240–Val-263 threads the bilayer. At Trp-264–Pro-283 the chain is on the extracellular side. Residues Thr-284–Gly-303 traverse the membrane as a helical segment. Over Gln-304 to Met-348 the chain is Cytoplasmic. The tract at residues Leu-322–Met-348 is disordered. The segment covering Ser-326–Asn-335 has biased composition (polar residues).

It belongs to the G-protein coupled receptor 1 family. Interacts with Amyloid-beta protein 42, product of APP; the interaction takes place at the cell surface and the complex is then rapidly internalized.

It is found in the cell membrane. Low affinity receptor for N-formyl-methionyl peptides, which are powerful neutrophil chemotactic factors. Binding of FMLP to the receptor causes activation of neutrophils. This response is mediated via a G-protein that activates a phosphatidylinositol-calcium second messenger system. Receptor for the chemokine-like protein FAM19A5, mediating FAM19A5-stimulated macrophage chemotaxis and the inhibitory effect on TNFSF11/RANKL-induced osteoclast differentiation. The chain is N-formyl peptide receptor 2 (FPR2) from Pan troglodytes (Chimpanzee).